The primary structure comprises 103 residues: Non-histone chromosomal protein HMG-14B (103 aa).

Residues 1-103 (MPKRKVAASR…AVEKEEVKSE (103 aa)) are disordered. The segment covering 29-50 (VPDKAEPKAKALAAKDKSENKK) has biased composition (basic and acidic residues). Residues 51–60 (AQSKGKKGPK) show a composition bias toward basic residues. Basic and acidic residues predominate over residues 94 to 103 (AVEKEEVKSE).

Belongs to the HMGN family.

Its subcellular location is the nucleus. In terms of biological role, binds to the inner side of the nucleosomal DNA thus altering the interaction between the DNA and the histone octamer. May be involved in the process which maintains transcribable genes in a unique chromatin conformation. This Gallus gallus (Chicken) protein is Non-histone chromosomal protein HMG-14B (HMG14).